The following is a 78-amino-acid chain: Small ribosomal subunit protein bS20 (78 aa).

The tract at residues 1–34 (MANIKSNLKRNKQNRARHTVVHSQTSAVKTQIKK) is disordered. Residues 7–20 (NLKRNKQNRARHTV) are compositionally biased toward basic residues. The segment covering 21-34 (VHSQTSAVKTQIKK) has biased composition (polar residues).

This sequence belongs to the bacterial ribosomal protein bS20 family.

Binds directly to 16S ribosomal RNA. This chain is Small ribosomal subunit protein bS20, found in Malacoplasma penetrans (strain HF-2) (Mycoplasma penetrans).